A 246-amino-acid chain; its full sequence is RNA polymerase sigma-B factor (246 aa).

The short motif at 25 to 38 (DLIQEGNIGLMKAV) is the Polymerase core binding element. The H-T-H motif DNA-binding region spans 201–220 (LKELGEHFGFSRERARQLEI).

The protein belongs to the sigma-70 factor family.

Functionally, sigma factors are initiation factors that promote the attachment of RNA polymerase to specific initiation sites and are then released. This sigma factor is essential for late-stage differentiation of M.xanthus. The polypeptide is RNA polymerase sigma-B factor (sigB) (Myxococcus xanthus).